The following is a 431-amino-acid chain: Serine hydroxymethyltransferase 2 (431 aa).

Residues Leu131 and 135 to 137 each bind (6S)-5,6,7,8-tetrahydrofolate; that span reads GHL. The residue at position 240 (Lys240) is an N6-(pyridoxal phosphate)lysine.

Belongs to the SHMT family. As to quaternary structure, homodimer. Pyridoxal 5'-phosphate is required as a cofactor.

It localises to the cytoplasm. It carries out the reaction (6R)-5,10-methylene-5,6,7,8-tetrahydrofolate + glycine + H2O = (6S)-5,6,7,8-tetrahydrofolate + L-serine. The protein operates within one-carbon metabolism; tetrahydrofolate interconversion. It functions in the pathway amino-acid biosynthesis; glycine biosynthesis; glycine from L-serine: step 1/1. In terms of biological role, catalyzes the reversible interconversion of serine and glycine with tetrahydrofolate (THF) serving as the one-carbon carrier. This reaction serves as the major source of one-carbon groups required for the biosynthesis of purines, thymidylate, methionine, and other important biomolecules. Also exhibits THF-independent aldolase activity toward beta-hydroxyamino acids, producing glycine and aldehydes, via a retro-aldol mechanism. The polypeptide is Serine hydroxymethyltransferase 2 (Vibrio parahaemolyticus serotype O3:K6 (strain RIMD 2210633)).